We begin with the raw amino-acid sequence, 391 residues long: Nuclear hormone receptor family member nhr-115 (391 aa).

Positions 5-77 form a DNA-binding region, nuclear receptor; the sequence is LFPCQICGQN…IGMDASKFQY (73 aa). The segment at 8–28 adopts an NR C4-type zinc-finger fold; the sequence is CQICGQNSHGTHFGIVSCRAC. The segment at 41-65 adopts an NR C4-type; atypical zinc-finger fold; it reads ARKGCLTNFKDKGSCFCKPCRLRKC. The NR LBD domain maps to 130-388; it reads YLDHGCETPI…FSHPEMFDDS (259 aa).

Belongs to the nuclear hormone receptor family.

It localises to the nucleus. In terms of biological role, orphan nuclear receptor. The protein is Nuclear hormone receptor family member nhr-115 (nhr-115) of Caenorhabditis elegans.